The primary structure comprises 177 residues: Large ribosomal subunit protein uL6 (177 aa).

Residues 157–171 are compositionally biased toward basic and acidic residues; sequence YKGKGVRYSDENVRR. Residues 157–177 form a disordered region; that stretch reads YKGKGVRYSDENVRRKEAKKK.

This sequence belongs to the universal ribosomal protein uL6 family. Part of the 50S ribosomal subunit.

In terms of biological role, this protein binds to the 23S rRNA, and is important in its secondary structure. It is located near the subunit interface in the base of the L7/L12 stalk, and near the tRNA binding site of the peptidyltransferase center. This Pseudoalteromonas translucida (strain TAC 125) protein is Large ribosomal subunit protein uL6.